We begin with the raw amino-acid sequence, 496 residues long: Probable uroporphyrinogen-III C-methyltransferase (496 aa).

This sequence belongs to the precorrin methyltransferase family.

It carries out the reaction uroporphyrinogen III + 2 S-adenosyl-L-methionine = precorrin-2 + 2 S-adenosyl-L-homocysteine + H(+). In terms of biological role, siroheme synthase involved in methionine biosynthesis. The chain is Probable uroporphyrinogen-III C-methyltransferase from Schizosaccharomyces pombe (strain 972 / ATCC 24843) (Fission yeast).